Here is an 832-residue protein sequence, read N- to C-terminus: FAST kinase domain-containing protein 1, mitochondrial (832 aa).

An RAP domain is found at 765–825 (VAIEFLDSKA…KDAWMDYLRK (61 aa)).

The protein belongs to the FAST kinase family.

Its subcellular location is the mitochondrion. May regulate the stability of some mitochondrial mRNA species. The chain is FAST kinase domain-containing protein 1, mitochondrial (fastkd1) from Xenopus laevis (African clawed frog).